Reading from the N-terminus, the 511-residue chain is Pentatricopeptide repeat-containing protein At5g08510 (511 aa).

PPR repeat units lie at residues 46 to 80 (CTFLYNKLIQAYYVHHQPHESIVLYNLLSFDGLRP), 81 to 115 (SHHTFNFIFAASASFSSARPLRLLHSQFFRSGFES), 116 to 146 (DSFCCTTLITAYAKLGALCCARRVFDEMSKR), 147 to 181 (DVPVWNAMITGYQRRGDMKAAMELFDSMPRKNVTS), 182 to 213 (WTTVISGFSQNGNYSEALKMFLCMEKDKSVKP), 214 to 248 (NHITVVSVLPACANLGELEIGRRLEGYARENGFFD), 249 to 279 (NIYVCNATIEMYSKCGMIDVAKRLFEELGNQ), 281 to 315 (NLCSWNSMIGSLATHGKHDEALTLFAQMLREGEKP), 316 to 346 (DAVTFVGLLLACVHGGMVVKGQELFKSMEEV), and 352 to 382 (KLEHYGCMIDLLGRVGKLQEAYDLIKTMPMK). The interval 387-462 (VWGTLLGACS…AAGYSYFVEV (76 aa)) is type E motif. The interval 463–494 (GVDVHKFTVEDKSHPRSYEIYQVLEEIFRRMK) is type E(+) motif.

The protein belongs to the PPR family. PCMP-E subfamily.

The sequence is that of Pentatricopeptide repeat-containing protein At5g08510 (PCMP-E20) from Arabidopsis thaliana (Mouse-ear cress).